The sequence spans 350 residues: Protein-glutamate methylesterase/protein-glutamine glutaminase 6 (350 aa).

The Response regulatory domain maps to 11–126 (RVLVVDDSAA…LAPVREELLE (116 aa)). 4-aspartylphosphate is present on D62. In terms of domain architecture, CheB-type methylesterase spans 150-347 (ELEPARVAVV…ARLVEFARDA (198 aa)). Active-site residues include S162, H189, and D289.

The protein belongs to the CheB family. Post-translationally, phosphorylated by CheA. Phosphorylation of the N-terminal regulatory domain activates the methylesterase activity.

Its subcellular location is the cytoplasm. The enzyme catalyses [protein]-L-glutamate 5-O-methyl ester + H2O = L-glutamyl-[protein] + methanol + H(+). The catalysed reaction is L-glutaminyl-[protein] + H2O = L-glutamyl-[protein] + NH4(+). Functionally, involved in chemotaxis. Part of a chemotaxis signal transduction system that modulates chemotaxis in response to various stimuli. Catalyzes the demethylation of specific methylglutamate residues introduced into the chemoreceptors (methyl-accepting chemotaxis proteins or MCP) by CheR. Also mediates the irreversible deamidation of specific glutamine residues to glutamic acid. The protein is Protein-glutamate methylesterase/protein-glutamine glutaminase 6 of Anaeromyxobacter dehalogenans (strain 2CP-C).